A 69-amino-acid polypeptide reads, in one-letter code: Sec-independent protein translocase protein TatA (69 aa).

A helical membrane pass occupies residues 1-21 (MFGKLGMPELVLIFAVALVIF).

This sequence belongs to the TatA/E family. As to quaternary structure, forms a complex with TatC.

The protein localises to the cell membrane. Part of the twin-arginine translocation (Tat) system that transports large folded proteins containing a characteristic twin-arginine motif in their signal peptide across membranes. TatA could form the protein-conducting channel of the Tat system. This Alkaliphilus metalliredigens (strain QYMF) protein is Sec-independent protein translocase protein TatA.